The sequence spans 169 residues: Methanogen homoaconitase small subunit (169 aa).

Residues 27-30 (YLRT) carry the YLRT motif.

It belongs to the LeuD family. LeuD type 2 subfamily. In terms of assembly, heterotetramer of 2 HacA and 2 HacB proteins.

It catalyses the reaction (2R)-homocitrate = (2R,3S)-homoisocitrate. It carries out the reaction (2R)-homocitrate = cis-homoaconitate + H2O. The enzyme catalyses (2R,3S)-homoisocitrate = cis-homoaconitate + H2O. The catalysed reaction is cis-(homo)2aconitate + H2O = (2R,3S)-iso(homo)2citrate. It catalyses the reaction cis-(homo)3aconitate + H2O = (2R,3S)-iso(homo)3citrate. It participates in organic acid metabolism; 2-oxosuberate biosynthesis. Component of a hydro-lyase with broad substrate specificity for cis-unsaturated tricarboxylic acids. Catalyzes both the reversible dehydration of (R)-homocitrate ((R)-2-hydroxybutane-1,2,4-tricarboxylate) to produce cis-homoaconitate ((Z)-but-1-ene-1,2,4-tricarboxylate), and its hydration to homoisocitrate ((1R,2S)-1-hydroxybutane-1,2,4-tricarboxylate). Is also able to hydrate the analogous longer chain substrates cis-homo(2)-aconitate, cis-homo(3)-aconitate. These reactions are part of the biosynthesis pathway of coenzyme B. This Methanosarcina mazei (strain ATCC BAA-159 / DSM 3647 / Goe1 / Go1 / JCM 11833 / OCM 88) (Methanosarcina frisia) protein is Methanogen homoaconitase small subunit (hacB).